Reading from the N-terminus, the 110-residue chain is Large ribosomal subunit protein uL24 (110 aa).

This sequence belongs to the universal ribosomal protein uL24 family. In terms of assembly, part of the 50S ribosomal subunit.

Its function is as follows. One of two assembly initiator proteins, it binds directly to the 5'-end of the 23S rRNA, where it nucleates assembly of the 50S subunit. One of the proteins that surrounds the polypeptide exit tunnel on the outside of the subunit. The protein is Large ribosomal subunit protein uL24 of Chloroflexus aurantiacus (strain ATCC 29366 / DSM 635 / J-10-fl).